The following is a 22-amino-acid chain: NDMA-dependent alcohol dehydrogenase (22 aa).

This sequence belongs to the zinc-containing alcohol dehydrogenase family. Homotetramer. NADH serves as cofactor.

The protein resides in the cytoplasm. It carries out the reaction N,N-dimethyl-4-nitrosoaniline + a primary alcohol = 4-(hydroxylamino)-N,N-dimethylaniline + an aldehyde. The catalysed reaction is ethanol + A = acetaldehyde + AH2. In terms of biological role, this is a novel enzyme, catalytically different from common alcohol dehydrogenases. It is effective in oxidizing ethanol, other primary alcohols and benzylalcohol only in the presence of p-nitroso-N,N-dimethylaniline (NDMA) as an electron acceptor. NADH acts as a cofactor here instead of as a coenzyme. In Rhodococcus erythropolis (Arthrobacter picolinophilus), this protein is NDMA-dependent alcohol dehydrogenase.